The following is a 692-amino-acid chain: Polyribonucleotide nucleotidyltransferase (692 aa).

Positions 484 and 490 each coordinate Mg(2+). In terms of domain architecture, KH spans P551–T614. The region spanning G620–K688 is the S1 motif domain.

This sequence belongs to the polyribonucleotide nucleotidyltransferase family. Mg(2+) serves as cofactor.

The protein localises to the cytoplasm. It carries out the reaction RNA(n+1) + phosphate = RNA(n) + a ribonucleoside 5'-diphosphate. In terms of biological role, involved in mRNA degradation. Catalyzes the phosphorolysis of single-stranded polyribonucleotides processively in the 3'- to 5'-direction. The chain is Polyribonucleotide nucleotidyltransferase from Desulfotalea psychrophila (strain LSv54 / DSM 12343).